We begin with the raw amino-acid sequence, 676 residues long: DNA ligase (676 aa).

NAD(+)-binding positions include 32 to 36 (DAEYD), 81 to 82 (SL), and E113. K115 serves as the catalytic N6-AMP-lysine intermediate. Residues R136, E173, K291, and K315 each contribute to the NAD(+) site. C409, C412, C427, and C433 together coordinate Zn(2+). Residues 595-676 (SEKTYFFNKK…LNSLIRIKEQ (82 aa)) form the BRCT domain.

This sequence belongs to the NAD-dependent DNA ligase family. LigA subfamily. It depends on Mg(2+) as a cofactor. The cofactor is Mn(2+).

It catalyses the reaction NAD(+) + (deoxyribonucleotide)n-3'-hydroxyl + 5'-phospho-(deoxyribonucleotide)m = (deoxyribonucleotide)n+m + AMP + beta-nicotinamide D-nucleotide.. DNA ligase that catalyzes the formation of phosphodiester linkages between 5'-phosphoryl and 3'-hydroxyl groups in double-stranded DNA using NAD as a coenzyme and as the energy source for the reaction. It is essential for DNA replication and repair of damaged DNA. The sequence is that of DNA ligase from Buchnera aphidicola subsp. Acyrthosiphon pisum (strain Tuc7).